Consider the following 885-residue polypeptide: Leucine--tRNA ligase (885 aa).

The short motif at 48–58 (PYPSGKLHMGH) is the 'HIGH' region element. Residues 639-643 (TMSKS) carry the 'KMSKS' region motif. K642 provides a ligand contact to ATP.

The protein belongs to the class-I aminoacyl-tRNA synthetase family.

The protein resides in the cytoplasm. The enzyme catalyses tRNA(Leu) + L-leucine + ATP = L-leucyl-tRNA(Leu) + AMP + diphosphate. The sequence is that of Leucine--tRNA ligase from Bordetella parapertussis (strain 12822 / ATCC BAA-587 / NCTC 13253).